A 177-amino-acid chain; its full sequence is Bifunctional protein PyrR (177 aa).

The short motif at V99–T111 is the PRPP-binding element.

Belongs to the purine/pyrimidine phosphoribosyltransferase family. PyrR subfamily.

The enzyme catalyses UMP + diphosphate = 5-phospho-alpha-D-ribose 1-diphosphate + uracil. In terms of biological role, regulates the transcription of the pyrimidine nucleotide (pyr) operon in response to exogenous pyrimidines. Also displays a weak uracil phosphoribosyltransferase activity which is not physiologically significant. This Akkermansia muciniphila (strain ATCC BAA-835 / DSM 22959 / JCM 33894 / BCRC 81048 / CCUG 64013 / CIP 107961 / Muc) protein is Bifunctional protein PyrR.